A 127-amino-acid chain; its full sequence is Putative pre-16S rRNA nuclease (127 aa).

This sequence belongs to the YqgF nuclease family.

It is found in the cytoplasm. Functionally, could be a nuclease involved in processing of the 5'-end of pre-16S rRNA. The protein is Putative pre-16S rRNA nuclease of Campylobacter jejuni subsp. jejuni serotype O:23/36 (strain 81-176).